Here is a 309-residue protein sequence, read N- to C-terminus: Taste receptor type 2 member 8 (309 aa).

Residues 1 to 7 (MFSPADN) are Extracellular-facing. The chain crosses the membrane as a helical span at residues 8 to 28 (IFIILITGEFILGILGNGYIA). At 29 to 50 (LVNWIDWIKKKKISTTDYILTN) the chain is on the cytoplasmic side. The chain crosses the membrane as a helical span at residues 51 to 71 (LVISRICLISVIVVNGIVTVL). Residues 72 to 82 (YPDVYTKSKLQ) are Extracellular-facing. Residues 83-103 (IAISTFWTFANYLNMWFTTCL) form a helical membrane-spanning segment. At 104 to 131 (NVFYFLKIANSSHPLFLWLKQKIDMVVR) the chain is on the cytoplasmic side. Residues 132–152 (WILLGCFAISLLVSLIIAIVL) form a helical membrane-spanning segment. At 153 to 184 (SRDYRFHAIAKHKRNITEMFHVSKMLYFEPLT) the chain is on the extracellular side. The N-linked (GlcNAc...) asparagine glycan is linked to N167. The helical transmembrane segment at 185–205 (LFNLLAIVPFIVSLMSFFLLV) threads the bilayer. The Cytoplasmic portion of the chain corresponds to 206-239 (RSLQRHTKQIKLYATGGRDPSTEAHVRAIKTMTS). Residues 240-260 (FIFFFFLYYITSLLVTFSYLM) traverse the membrane as a helical segment. The Extracellular segment spans residues 261–266 (TKYKLA). A helical transmembrane segment spans residues 267–287 (MAFGEIVAILYPSGHSFILII). Over 288–309 (LNNKLRQASVRMLTCIKITCVI) the chain is Cytoplasmic.

The protein belongs to the G-protein coupled receptor T2R family.

It is found in the membrane. Receptor that may play a role in the perception of bitterness and is gustducin-linked. May play a role in sensing the chemical composition of the gastrointestinal content. The activity of this receptor may stimulate alpha gustducin, mediate PLC-beta-2 activation and lead to the gating of TRPM5. This Pongo pygmaeus (Bornean orangutan) protein is Taste receptor type 2 member 8 (TAS2R8).